Here is a 299-residue protein sequence, read N- to C-terminus: Glycine--tRNA ligase alpha subunit (299 aa).

Belongs to the class-II aminoacyl-tRNA synthetase family. Tetramer of two alpha and two beta subunits.

It is found in the cytoplasm. The enzyme catalyses tRNA(Gly) + glycine + ATP = glycyl-tRNA(Gly) + AMP + diphosphate. This chain is Glycine--tRNA ligase alpha subunit, found in Dichelobacter nodosus (strain VCS1703A).